The primary structure comprises 274 residues: Pyridoxal phosphate homeostasis protein (274 aa).

Serine 6 is subject to Phosphoserine. An N6-(pyridoxal phosphate)lysine modification is found at lysine 47. Tyrosine 69 bears the Phosphotyrosine mark. Lysine 125 is modified (N6-succinyllysine). Residues serine 226 and serine 244 each carry the phosphoserine modification.

It belongs to the pyridoxal phosphate-binding protein YggS/PROSC family.

Its function is as follows. Pyridoxal 5'-phosphate (PLP)-binding protein, which may be involved in intracellular homeostatic regulation of pyridoxal 5'-phosphate (PLP), the active form of vitamin B6. In Mus musculus (Mouse), this protein is Pyridoxal phosphate homeostasis protein.